A 478-amino-acid polypeptide reads, in one-letter code: Kynureninase (478 aa).

Residues Leu138, Thr139, 166–169 (FPSD), Asp252, His255, and Tyr277 each bind pyridoxal 5'-phosphate. Position 278 is an N6-(pyridoxal phosphate)lysine (Lys278). Residues Trp315 and Asn343 each contribute to the pyridoxal 5'-phosphate site.

The protein belongs to the kynureninase family. In terms of assembly, homodimer. The cofactor is pyridoxal 5'-phosphate.

It localises to the cytoplasm. It catalyses the reaction L-kynurenine + H2O = anthranilate + L-alanine + H(+). It carries out the reaction 3-hydroxy-L-kynurenine + H2O = 3-hydroxyanthranilate + L-alanine + H(+). Its pathway is amino-acid degradation; L-kynurenine degradation; L-alanine and anthranilate from L-kynurenine: step 1/1. The protein operates within cofactor biosynthesis; NAD(+) biosynthesis; quinolinate from L-kynurenine: step 2/3. Its function is as follows. Catalyzes the cleavage of L-kynurenine (L-Kyn) and L-3-hydroxykynurenine (L-3OHKyn) into anthranilic acid (AA) and 3-hydroxyanthranilic acid (3-OHAA), respectively. This is Kynureninase from Coccidioides immitis (strain RS) (Valley fever fungus).